The sequence spans 74 residues: Putative defensin-like protein 128 (74 aa).

Residues 1–24 (MSKLTNVVIFIVFFLGMMAKETQG) form the signal peptide. 4 disulfide bridges follow: C28–C72, C37–C56, C42–C66, and C46–C68.

Belongs to the DEFL family.

The protein resides in the secreted. In Arabidopsis thaliana (Mouse-ear cress), this protein is Putative defensin-like protein 128 (LCR8).